Consider the following 224-residue polypeptide: A-factor barrier protein 1 (224 aa).

An N-terminal signal peptide occupies residues 1 to 25 (MIFAPSFSLIKNILLVSFLISHSFA). Asparagine 148, asparagine 181, and asparagine 191 each carry an N-linked (GlcNAc...) asparagine glycan. A lipid anchor (GPI-anchor amidated asparagine) is attached at asparagine 203. A propeptide spans 204-224 (GAHAKSLYFPMALFGIFAVAL) (removed in mature form).

This sequence belongs to the SRP1/TIP1 family. In terms of processing, the GPI-anchor is attached to the protein in the endoplasmic reticulum and serves to target the protein to the cell surface. There, the glucosamine-inositol phospholipid moiety is cleaved off and the GPI-modified mannoprotein is covalently attached via its lipidless GPI glycan remnant to the 1,6-beta-glucan of the outer cell wall layer.

It is found in the secreted. Its subcellular location is the cell wall. It localises to the membrane. Functionally, MATalpha-specific protein that interferes with a-factor, the pheromone secreted by MATa cells. Contributes to mating efficiency. Acts to bind and sequester a-factor rather than to degrade it, and promotes the efficient mating of MATalpha cells by keeping the a-factor concentration at the plasma membrane within the narrow range needed for accurate pheromone gradient detection. The chain is A-factor barrier protein 1 from Saccharomyces cerevisiae (strain ATCC 204508 / S288c) (Baker's yeast).